Consider the following 412-residue polypeptide: MKGSNIRRWGAALAVVIIAGAAYWFWHDRGTSGSGAPAAGQGPQGPGGARHGRFGAALAPVQAATATEEAVPRYLTGLGTVTAANTVTVRSRVDGQLLSLHFQEGQQVKAGDLLAQIDPSQFKVALAQAQGQLAKDQATLANARRDLARYQQLVKTNLVSRQELDTQQSLVVESAGTVKADEAAVASAQLQLDWTRITAPIDGRVGLKQVDIGNQISSGDTTGIVVLTQTHPIDVVFTLPESSIATVVQAQKAGKALSVEAWDRTNKQKISVGELLSLDNQIDATTGTIKLKARFSNLDDALFPNQFVNARLLVDTQQNAVVIPAAALQMGNEGHFVWVLNDENKVSKHSVTPGIQDSQKVVISAGLSAGDRVVTDGIDRLTEGAKVEVVTASSGEQAQPAPRQSGKHGARS.

The signal sequence occupies residues 1–21; that stretch reads MKGSNIRRWGAALAVVIIAGA. Disordered stretches follow at residues 33–53 and 389–412; these read GSGAPAAGQGPQGPGGARHGR and VVTASSGEQAQPAPRQSGKHGARS.

The protein belongs to the membrane fusion protein (MFP) (TC 8.A.1) family. As to quaternary structure, part of a tripartite efflux system composed of MdtA, MdtB and MdtC.

The protein resides in the cell inner membrane. This is Multidrug resistance protein MdtA from Klebsiella pneumoniae subsp. pneumoniae (strain ATCC 700721 / MGH 78578).